An 822-amino-acid chain; its full sequence is Serine/threonine-protein kinase kin-29 (822 aa).

The 252-residue stretch at 16–267 (YDVGRAIGKG…IQNVLQHRWM (252 aa)) folds into the Protein kinase domain. Residues 22 to 30 (IGKGNFATV) and Lys-45 each bind ATP. The active-site Proton acceptor is Asp-138. Disordered regions lie at residues 348 to 367 (EGTG…LSGK), 389 to 423 (LSSP…RQFG), and 577 to 602 (NPIP…WASP). Residues 394-406 (CDSDDSSNSDLCD) show a composition bias toward acidic residues.

It belongs to the protein kinase superfamily. CAMK Ser/Thr protein kinase family. SNF1 subfamily. As to quaternary structure, interacts with tax-6. It depends on Mg(2+) as a cofactor. Autophosphorylated. Elevated cAMP levels appears to act via PKA to directly or indirectly phosphorylate multiple sites on kin-29 and inhibit function. In terms of tissue distribution, primarily neuronal, with additional expression in body wall muscle and hypodermal cells. Among neuronal cells, expressed in multiple sensory neurons and interneurons in the lateral, anterior, and lumbar ganglia, as well as in motor neurons in the ventral motor cord. Present in the AWB and AWC olfactory neurons.

It is found in the cytoplasm. The protein resides in the nucleus. It catalyses the reaction L-seryl-[protein] + ATP = O-phospho-L-seryl-[protein] + ADP + H(+). The catalysed reaction is L-threonyl-[protein] + ATP = O-phospho-L-threonyl-[protein] + ADP + H(+). Functionally, regulates chemoreceptor expression by phosphorylating the hda-4 class II histone deacetylase (HDAC) and inhibiting the gene repression functions of hda-4 and the mef-2 transcription factor, enabling the correct sensing and transduction of food signals. Role in determining body size, the dauer decision and serotonin-mediated egg laying. May modulate the Sma/Mab pathway and regulates development in the later larval stages. This chain is Serine/threonine-protein kinase kin-29, found in Caenorhabditis elegans.